The primary structure comprises 302 residues: HTH-type transcriptional regulator AlsR (302 aa).

The HTH lysR-type domain occupies 1 to 58; that stretch reads MELRHLQYFIAVAEELHFGKAARRLNMTQPPLSQQIKQLEEEVGVTLLKRTKRFVELT. Residues 18–37 constitute a DNA-binding region (H-T-H motif); it reads FGKAARRLNMTQPPLSQQIK.

The protein belongs to the LysR transcriptional regulatory family.

Functionally, regulates the expression of the alsSD operon for acetoin biosynthesis. This Bacillus subtilis (strain 168) protein is HTH-type transcriptional regulator AlsR (alsR).